A 41-amino-acid polypeptide reads, in one-letter code: U3-theraphotoxin-Hs1a (41 aa).

Cystine bridges form between C2/C16, C9/C37, and C17/C40.

Belongs to the neurotoxin 14 (magi-1) family. 01 (HNTX-16) subfamily. As to expression, expressed by the venom gland.

Its subcellular location is the secreted. In terms of biological role, intracerebroventricular injection paralyzes mice. Has no effect on voltage-gated sodium currents. The protein is U3-theraphotoxin-Hs1a of Cyriopagopus schmidti (Chinese bird spider).